Here is a 444-residue protein sequence, read N- to C-terminus: UDP-N-acetylmuramoylalanine--D-glutamate ligase (444 aa).

An ATP-binding site is contributed by G113–T119.

It belongs to the MurCDEF family.

It localises to the cytoplasm. The catalysed reaction is UDP-N-acetyl-alpha-D-muramoyl-L-alanine + D-glutamate + ATP = UDP-N-acetyl-alpha-D-muramoyl-L-alanyl-D-glutamate + ADP + phosphate + H(+). Its pathway is cell wall biogenesis; peptidoglycan biosynthesis. Functionally, cell wall formation. Catalyzes the addition of glutamate to the nucleotide precursor UDP-N-acetylmuramoyl-L-alanine (UMA). In Blochmanniella floridana, this protein is UDP-N-acetylmuramoylalanine--D-glutamate ligase.